Here is a 238-residue protein sequence, read N- to C-terminus: Small ribosomal subunit protein uS2 (238 aa).

It belongs to the universal ribosomal protein uS2 family.

In Haemophilus ducreyi (strain 35000HP / ATCC 700724), this protein is Small ribosomal subunit protein uS2.